The primary structure comprises 912 residues: uncharacterized protein (912 aa).

2 stretches are compositionally biased toward basic and acidic residues: residues 20 to 32 and 39 to 67; these read IERL…AEPA and HEYE…EDKT. Positions 20–91 are disordered; that stretch reads IERLREQGRA…KPTLPQPETD (72 aa). Over residues 68-77 the composition is skewed to basic residues; that stretch reads RHKKLKHRSR.

This is an uncharacterized protein from Penicillium chrysogenum virus (isolate Caston/2003) (PcV).